We begin with the raw amino-acid sequence, 219 residues long: MTQMQQTILDAFNFRHATKRFDANKKISESDFNTILETGRLSPSSLGLEPWRFVVIQNREIRDKLKAISWGAQGQLDTASHFVLILARKNVTSQSDYVQHMIRNVKKYSEASIPATEKKFDDFQTNFHINDNDQSLLDWARKQTYIALGNMMTSAALLNIDSCPIEGFDLDAVTQFLTDDGIIDEAHFAPSVMVAFGYRETEPKDKVRQTQDDIVEWLE.

The protein belongs to the nitroreductase family. The cofactor is FMN.

This chain is Putative NAD(P)H nitroreductase SSP0379, found in Staphylococcus saprophyticus subsp. saprophyticus (strain ATCC 15305 / DSM 20229 / NCIMB 8711 / NCTC 7292 / S-41).